The chain runs to 5141 residues: SCO-spondin (5141 aa).

The first 17 residues, 1–17 (MLLPALLFGMLWAPANG), serve as a signal peptide directing secretion. The EMI domain occupies 18–102 (HWCEQIETVH…ACCPGWGGIH (85 aa)). N-linked (GlcNAc...) asparagine glycans are attached at residues Asn-88, Asn-130, Asn-150, and Asn-167. The 172-residue stretch at 193 to 364 (ATCATWSGFH…RLPGYEPGCL (172 aa)) folds into the VWFD 1 domain. 3 disulfide bridges follow: Cys-195/Cys-325, Cys-217/Cys-363, and Cys-239/Cys-245. Positions 472-527 (CPGGQLYSDCISSCPPSCSAVAQGEEGSCGKECVSGCECPTGLFWDGALCVPAAHC) constitute a TIL 1 domain. The 174-residue stretch at 565-738 (AECAVGGDGH…FQVSGDGRCP (174 aa)) folds into the VWFD 2 domain. 2 disulfides stabilise this stretch: Cys-567-Cys-700 and Cys-591-Cys-737. N-linked (GlcNAc...) asparagine glycans are attached at residues Asn-657 and Asn-822. One can recognise a TIL 2 domain in the interval 830–883 (CPGGQVYQECAPACGHYCGEPEDCKELGSCVAGCNCPPGLLWDLEGQCVPPSMC). Residues Asn-895, Asn-949, and Asn-991 are each glycosylated (N-linked (GlcNAc...) asparagine). A VWFD 3 domain is found at 1017-1187 (GWCQASGAPH…HSWRLNPLCP (171 aa)). Intrachain disulfides connect Cys-1019–Cys-1151, Cys-1041–Cys-1186, and Cys-1062–Cys-1069. Residues 1280–1336 (CEGGQVYEPCGSTCPPTCHDHHPELRWHCQAITCVEGCFCPEGTLLHGGTCVELTDC) form the TIL 3 domain. Asn-1357 carries an N-linked (GlcNAc...) asparagine glycan. LDL-receptor class A domains lie at 1380–1417 (GCAE…EGCD), 1420–1456 (VCGE…QGCL), 1456–1492 (LCPQ…ESCL), and 1496–1534 (SCTS…VHCS). Disulfide bonds link Cys-1381-Cys-1394, Cys-1388-Cys-1407, Cys-1401-Cys-1416, Cys-1421-Cys-1433, Cys-1428-Cys-1446, Cys-1440-Cys-1455, Cys-1457-Cys-1469, Cys-1464-Cys-1482, Cys-1476-Cys-1491, Cys-1497-Cys-1509, Cys-1504-Cys-1522, and Cys-1516-Cys-1533. The segment at 1533 to 1567 (CSSPSLPTPPAGIGQNPSTSSPDTSPSPVGSASPA) is disordered. Low complexity predominate over residues 1549 to 1567 (PSTSSPDTSPSPVGSASPA). 2 LDL-receptor class A domains span residues 1569–1605 (PCSL…LDCG) and 1607–1646 (PCKL…DVCE). 6 disulfide bridges follow: Cys-1570/Cys-1582, Cys-1577/Cys-1595, Cys-1589/Cys-1604, Cys-1608/Cys-1621, Cys-1615/Cys-1634, and Cys-1628/Cys-1645. Asn-1655 and Asn-1668 each carry an N-linked (GlcNAc...) asparagine glycan. Residues 1660–1700 (PCPEFSCPNGTCIDFLLVCDGSPDCELADETEPSLDEQGCG) enclose the LDL-receptor class A 7 domain. 9 disulfide bridges follow: Cys-1661/Cys-1671, Cys-1666/Cys-1684, Cys-1678/Cys-1699, Cys-1711/Cys-1747, Cys-1715/Cys-1752, Cys-1726/Cys-1737, Cys-1767/Cys-1964, Cys-1771/Cys-1969, and Cys-1781/Cys-1791. TSP type-1 domains follow at residues 1699 to 1753 (CGTW…EACP) and 1755 to 1970 (DGEW…EPCE). An N-linked (GlcNAc...) asparagine glycan is attached at Asn-1725. The N-linked (GlcNAc...) asparagine glycan is linked to Asn-1814. EGF-like domains follow at residues 1829-1868 (CPLT…GRCV) and 1869-1895 (RPRQ…CQLC). The VWFC 1 domain maps to 1970–2030 (EGCEQWGLTY…GMGESCCHCA (61 aa)). N-linked (GlcNAc...) asparagine glycosylation is present at Asn-2035. 4 disulfides stabilise this stretch: Cys-2070–Cys-2226, Cys-2236–Cys-2248, Cys-2243–Cys-2261, and Cys-2255–Cys-2270. Residues 2070–2226 (CYSPLGLAGL…IFLWVELLGC (157 aa)) enclose the F5/8 type C domain. Residues 2087-2109 (PLEHSTRAAPVEAPTAGPGPRED) form a disordered region. Asn-2130 and Asn-2148 each carry an N-linked (GlcNAc...) asparagine glycan. In terms of domain architecture, LDL-receptor class A 8 spans 2235–2271 (LCPGTRHRCANGDCALKGGPCDGAVDCEDGSDEEGCG). Residues 2262–2335 (EDGSDEEGCG…SPSASEGLLP (74 aa)) are disordered. Positions 2276-2294 (STASRVHSTARTPALSPTQ) are enriched in polar residues. The span at 2301–2314 (HPREGLADMEHQQP) shows a compositional bias: basic and acidic residues. 2 LDL-receptor class A domains span residues 2391 to 2427 (RCGP…QHCA) and 2448 to 2484 (LCSP…DDCV). Disulfide bonds link Cys-2392/Cys-2404, Cys-2399/Cys-2417, Cys-2411/Cys-2426, Cys-2449/Cys-2461, Cys-2456/Cys-2474, Cys-2468/Cys-2483, Cys-2486/Cys-2522, Cys-2497/Cys-2501, Cys-2532/Cys-2537, Cys-2552/Cys-2589, Cys-2556/Cys-2594, and Cys-2567/Cys-2579. TSP type-1 domains lie at 2485–2538 (DCVL…QACP) and 2540–2595 (AGAW…QLCP). In terms of domain architecture, TIL 4 spans 2618–2660 (PPCPPSCLDPEANRSCSGHCVEGCRCPPGLFLQDSHCLPLSEC). Asn-2630 and Asn-2679 each carry an N-linked (GlcNAc...) asparagine glycan. TSP type-1 domains lie at 2700-2754 (SCGW…TDCG), 2758-2813 (PGWT…SLCP), and 2815-2868 (PSAW…HPCT). 9 disulfide bridges follow: Cys-2701/Cys-2739, Cys-2712/Cys-2716, Cys-2749/Cys-2753, Cys-2769/Cys-2807, Cys-2773/Cys-2812, Cys-2789/Cys-2797, Cys-2827/Cys-2862, Cys-2831/Cys-2867, and Cys-2842/Cys-2852. Asn-2921 and Asn-2951 each carry an N-linked (GlcNAc...) asparagine glycan. 2 TSP type-1 domains span residues 2969-3024 (ACGW…RPCQ) and 3025-3068 (GPGA…QPCA). Cystine bridges form between Cys-2970-Cys-3008, Cys-2981-Cys-2985, and Cys-3018-Cys-3023. Residues Asn-3046, Asn-3101, Asn-3148, and Asn-3158 are each glycosylated (N-linked (GlcNAc...) asparagine). The TIL 5 domain occupies 3075 to 3127 (CPKDQQWLDCAQGPASCAHLSTPREANQTCHPGCYCLSGMLLLNNVCVPAQDC). 2 TSP type-1 domains span residues 3168-3235 (QPAW…PGCN) and 3237-3292 (AGVW…QPCP). 6 cysteine pairs are disulfide-bonded: Cys-3180–Cys-3229, Cys-3184–Cys-3234, Cys-3195–Cys-3219, Cys-3249–Cys-3286, Cys-3253–Cys-3291, and Cys-3264–Cys-3276. Residue Asn-3295 is glycosylated (N-linked (GlcNAc...) asparagine). Residues 3300–3350 (EGAEYSPCGPPCPRSCDDLVHCMWHCQPGCYCPPGKVLSADGAICVQPHHC) form the TIL 6 domain. Asn-3384 carries an N-linked (GlcNAc...) asparagine glycan. TSP type-1 domains lie at 3393 to 3455 (SGDW…TACP) and 3457 to 3512 (DGAW…TPCT). 6 disulfide bridges follow: Cys-3405–Cys-3448, Cys-3409–Cys-3454, Cys-3420–Cys-3432, Cys-3469–Cys-3504, Cys-3472–Cys-3511, and Cys-3482–Cys-3494. N-linked (GlcNAc...) asparagine glycosylation is present at Asn-3506. Residues 3514 to 3570 (CGGGQDLLPCGQPCPHSCQDLSLGSTCQPGSSGCQSGCGCPPGQLSQDGLCVFPADC) form the TIL 7 domain. Asn-3584 and Asn-3611 each carry an N-linked (GlcNAc...) asparagine glycan. In terms of domain architecture, TSP type-1 14 spans 3630–3678 (PGIWSSWGPWEKCSVPCGGGEQLRSRQCARPPCPGLAQQSRTCHIHVCR). Intrachain disulfides connect Cys-3642/Cys-3672, Cys-3646/Cys-3677, and Cys-3657/Cys-3662. Asn-3787 is a glycosylation site (N-linked (GlcNAc...) asparagine). TSP type-1 domains lie at 3806–3862 (RGYF…PECP), 3876–3928 (AGGW…PSCT), 3942–3998 (NCFW…RACP), and 4000–4055 (PGGW…MPCE). 3 cysteine pairs are disulfide-bonded: Cys-3818/Cys-3856, Cys-3822/Cys-3861, and Cys-3834/Cys-3846. Asn-3910 carries an N-linked (GlcNAc...) asparagine glycan. Cystine bridges form between Cys-3943/Cys-3979, Cys-3954/Cys-3958, Cys-3992/Cys-3997, Cys-4012/Cys-4049, Cys-4016/Cys-4054, and Cys-4027/Cys-4039. Residues 4058 to 4113 (CPAGMEMVSCANRCPYSCSDLQEAVMCQEDQACQLGCRCSEGFLEQDGGCVPVGHC) form the TIL 8 domain. Residue Asn-4135 is glycosylated (N-linked (GlcNAc...) asparagine). TSP type-1 domains are found at residues 4155–4208 (HCAW…DPCP), 4249–4304 (PGGW…QLCL), 4306–4362 (LLEI…GPCQ), and 4364–4418 (DCMW…GNCS). 6 cysteine pairs are disulfide-bonded: Cys-4156–Cys-4192, Cys-4167–Cys-4171, Cys-4202–Cys-4207, Cys-4261–Cys-4298, Cys-4265–Cys-4303, and Cys-4276–Cys-4288. An N-linked (GlcNAc...) asparagine glycan is attached at Asn-4345. Cystine bridges form between Cys-4365/Cys-4402, Cys-4376/Cys-4378, and Cys-4412/Cys-4417. Asn-4416 carries N-linked (GlcNAc...) asparagine glycosylation. In terms of domain architecture, TIL 9 spans 4422–4477 (CLPPFEFQSCGSPCAGLCATHLSHQLCQDLPPCQPGCYCPMGLLEQDGGCILPEQC). Asn-4557 carries N-linked (GlcNAc...) asparagine glycosylation. The region spanning 4608–4659 (TCQWGPWGPWSPCQVPCSGGFKLRWREASDNSVGECRGPWAQTESCNMGSCP) is the TSP type-1 23 domain. 3 disulfide bridges follow: Cys-4609-Cys-4643, Cys-4620-Cys-4624, and Cys-4653-Cys-4658. The TIL 10 domain maps to 4673 to 4719 (DCANQCPRSCADLWEGVQCLQGPCSPGCRCPPGQLVQDGHCVPISSC). N-linked (GlcNAc...) asparagine glycosylation is found at Asn-4727, Asn-4744, and Asn-4749. Residues 4759-4812 (CPVLGPWSPWSECSAVCGGGTMVRYRSCEEHPDSAPCQALDMEQRVECNLQTCP) enclose the TSP type-1 24 domain. Disulfide bonds link Cys-4771-Cys-4806, Cys-4775-Cys-4811, and Cys-4786-Cys-4795. Residues 4814–4868 (CPPGQVLSTCATLCPSFCSHLWPGTICVREPCQLGCGCPGGQLLHSGTCIPPEAC) enclose the TIL 11 domain. Residues Asn-4899, Asn-4942, and Asn-4949 are each glycosylated (N-linked (GlcNAc...) asparagine). In terms of domain architecture, TIL 12 spans 4920 to 4978 (CPPGEILQLGELRPCEKTCLEMNKTQAWSNCTEAQVPGCVCQLGHFRSHTGLCVPEDHC). One can recognise a VWFC 2 domain in the interval 4978-5036 (CECWHHGSPHLPGSEWQEACESCRCLHGKSVCTQHCPELSCAQGEVVVQEPGSCCPICQ). Cystine bridges form between Cys-5047-Cys-5095, Cys-5061-Cys-5112, Cys-5071-Cys-5128, and Cys-5075-Cys-5130. In terms of domain architecture, CTCK spans 5047–5134 (CRHLTELRNL…IHNCHCSACQ (88 aa)). A glycan (N-linked (GlcNAc...) asparagine) is linked at Asn-5055.

The protein belongs to the thrombospondin family.

It is found in the secreted. It localises to the extracellular space. Its function is as follows. Involved in the modulation of neuronal aggregation. May be involved in developmental events during the formation of the central nervous system. This chain is SCO-spondin, found in Rattus norvegicus (Rat).